The chain runs to 81 residues: MSHSVKIYDTCIGCTQCVRACPLDVLEMVPWDGCKAGQIASSPRTEDCIGCKRCETACPTDFLSVRVYLGAETTRSMGLAY.

4Fe-4S ferredoxin-type domains lie at 2–31 (SHSV…MVPW) and 37–68 (GQIA…VRVY). 8 residues coordinate [4Fe-4S] cluster: Cys11, Cys14, Cys17, Cys21, Cys48, Cys51, Cys54, and Cys58.

The cyanobacterial PSI reaction center is composed of one copy each of PsaA,B,C,D,E,F,I,J,K,L,M and X, and forms trimeric complexes. It depends on [4Fe-4S] cluster as a cofactor.

It localises to the cellular thylakoid membrane. The enzyme catalyses reduced [plastocyanin] + hnu + oxidized [2Fe-2S]-[ferredoxin] = oxidized [plastocyanin] + reduced [2Fe-2S]-[ferredoxin]. Its function is as follows. Apoprotein for the two 4Fe-4S centers FA and FB of photosystem I (PSI); essential for photochemical activity. FB is the terminal electron acceptor of PSI, donating electrons to ferredoxin. The C-terminus interacts with PsaA/B/D and helps assemble the protein into the PSI complex. Required for binding of PsaD and PsaE to PSI. PSI is a plastocyanin/cytochrome c6-ferredoxin oxidoreductase, converting photonic excitation into a charge separation, which transfers an electron from the donor P700 chlorophyll pair to the spectroscopically characterized acceptors A0, A1, FX, FA and FB in turn. The chain is Photosystem I iron-sulfur center from Trichodesmium erythraeum (strain IMS101).